Here is a 500-residue protein sequence, read N- to C-terminus: L-arabinose isomerase (500 aa).

Residues glutamate 306, glutamate 333, histidine 350, and histidine 450 each coordinate Mn(2+).

The protein belongs to the arabinose isomerase family. Homohexamer. Mn(2+) serves as cofactor.

The enzyme catalyses beta-L-arabinopyranose = L-ribulose. It functions in the pathway carbohydrate degradation; L-arabinose degradation via L-ribulose; D-xylulose 5-phosphate from L-arabinose (bacterial route): step 1/3. In terms of biological role, catalyzes the conversion of L-arabinose to L-ribulose. The sequence is that of L-arabinose isomerase from Salmonella typhi.